The following is a 577-amino-acid chain: Arginine--tRNA ligase (577 aa).

The short motif at 122–132 (PNVAKEMHVGH) is the 'HIGH' region element.

The protein belongs to the class-I aminoacyl-tRNA synthetase family. In terms of assembly, monomer.

The protein localises to the cytoplasm. It carries out the reaction tRNA(Arg) + L-arginine + ATP = L-arginyl-tRNA(Arg) + AMP + diphosphate. The polypeptide is Arginine--tRNA ligase (Vibrio vulnificus (strain CMCP6)).